The chain runs to 424 residues: MIIIKNGYVIDPLTKREGKFDILIDGENVVRISQDIGIDDDIEVIDAEDCIVSPGFIDIHSHFRDPGFTEKEDIITGARAAARGGYTTVICMANTNPVVDNVETLRYIVDKAKTAKIEVLQVGTITKGMQGVELVDMEALKEAGAVGFSDDGKPIMDSRLVLEAMQKARELDVPLSFHEEDPKLVYESGINGGKVAEKLNMMGALEEAETVLTARDAALAVSSGAKTNIQHISSKISLGIIKLAKEMGANIIAEATPQHFSITEEEILNCGTNAKVNPPLRREDDRKAIVAALKDDTIQVIATDHAPHTKDEKAREFKEAPSGMIGLETALSLAVTNLVKTGDLTYRDMISKLTINPARFYNLDRGYIKEGHRADIVIFDPDEKYTVKEEEFQSKASNSPFIGKELFGKVKTTIYNGKIVYEDK.

Zn(2+)-binding residues include H60 and H62. Substrate is bound by residues H62 to R64 and N94. Residues D151, H178, and H231 each contribute to the Zn(2+) site. N277 contributes to the substrate binding site. D304 is a binding site for Zn(2+). Residue D304 is part of the active site. Substrate is bound at residue H308.

The protein belongs to the metallo-dependent hydrolases superfamily. DHOase family. Class I DHOase subfamily. Zn(2+) is required as a cofactor.

The enzyme catalyses (S)-dihydroorotate + H2O = N-carbamoyl-L-aspartate + H(+). It functions in the pathway pyrimidine metabolism; UMP biosynthesis via de novo pathway; (S)-dihydroorotate from bicarbonate: step 3/3. In terms of biological role, catalyzes the reversible cyclization of carbamoyl aspartate to dihydroorotate. The protein is Dihydroorotase of Clostridium acetobutylicum (strain ATCC 824 / DSM 792 / JCM 1419 / IAM 19013 / LMG 5710 / NBRC 13948 / NRRL B-527 / VKM B-1787 / 2291 / W).